Consider the following 89-residue polypeptide: Large ribosomal subunit protein uL24 (89 aa).

This sequence belongs to the universal ribosomal protein uL24 family. As to quaternary structure, part of the 50S ribosomal subunit.

One of two assembly initiator proteins, it binds directly to the 5'-end of the 23S rRNA, where it nucleates assembly of the 50S subunit. Functionally, one of the proteins that surrounds the polypeptide exit tunnel on the outside of the subunit. The chain is Large ribosomal subunit protein uL24 from Oenococcus oeni (strain ATCC BAA-331 / PSU-1).